The following is a 542-amino-acid chain: Chaperonin GroEL (542 aa).

Residues 29–32 (TLGP), 86–90 (DGTTT), Gly-413, 476–478 (NAA), and Asp-492 contribute to the ATP site. The interval 522 to 542 (PDENGPAAVPDMGMGGMGGMM) is disordered.

It belongs to the chaperonin (HSP60) family. In terms of assembly, forms a cylinder of 14 subunits composed of two heptameric rings stacked back-to-back. Interacts with the co-chaperonin GroES.

It localises to the cytoplasm. It catalyses the reaction ATP + H2O + a folded polypeptide = ADP + phosphate + an unfolded polypeptide.. Its function is as follows. Together with its co-chaperonin GroES, plays an essential role in assisting protein folding. The GroEL-GroES system forms a nano-cage that allows encapsulation of the non-native substrate proteins and provides a physical environment optimized to promote and accelerate protein folding. The polypeptide is Chaperonin GroEL (Listeria monocytogenes serotype 4b (strain CLIP80459)).